The sequence spans 449 residues: GTPase Der (449 aa).

EngA-type G domains follow at residues 4–174 and 183–358; these read PIVA…PPKT and LRVA…AQRQ. GTP contacts are provided by residues 10 to 17, 57 to 61, 126 to 129, 189 to 196, 236 to 240, and 301 to 304; these read GRPNVGKS, DTAGL, NKCD, DTAGI, and NKWD. The region spanning 359 to 444 is the KH-like domain; the sequence is KRIPTSELNN…PIVIVFRSRE (86 aa).

The protein belongs to the TRAFAC class TrmE-Era-EngA-EngB-Septin-like GTPase superfamily. EngA (Der) GTPase family. In terms of assembly, associates with the 50S ribosomal subunit.

In terms of biological role, GTPase that plays an essential role in the late steps of ribosome biogenesis. The chain is GTPase Der from Chloroflexus aggregans (strain MD-66 / DSM 9485).